Reading from the N-terminus, the 362-residue chain is 45 kDa calcium-binding protein (362 aa).

The N-terminal stretch at 1 to 36 is a signal peptide; sequence MVWPWVAMASRWGPLIGLAPCCLWLLGAVLLMDASA. The N-linked (GlcNAc...) asparagine glycan is linked to asparagine 40. 2 EF-hand domains span residues 98–133 and 137–172; these read RSRR…KTAE and EAME…SKGH. Serine 99 is modified (phosphoserine). Residues aspartate 111, asparagine 113, aspartate 115, lysine 117, glutamate 122, aspartate 150, aspartate 152, aspartate 154, histidine 156, and glutamate 161 each coordinate Ca(2+). Threonine 193 carries the phosphothreonine modification. 4 EF-hand domains span residues 197-232, 233-268, 278-313, and 314-349; these read LENL…HSRG, MLRF…TVEN, WVKD…MNEY, and NALN…FTGS. Aspartate 213 contacts Ca(2+). Threonine 217 carries the phosphothreonine modification. Residues glutamate 220, aspartate 246, aspartate 248, aspartate 250, glutamine 252, and glutamate 257 each contribute to the Ca(2+) site. At threonine 265 the chain carries Phosphothreonine. 3 residues coordinate Ca(2+): aspartate 291, asparagine 293, and aspartate 295. Phosphothreonine is present on threonine 299. Residues glutamate 302, aspartate 327, asparagine 329, asparagine 331, histidine 333, and glutamate 338 each contribute to the Ca(2+) site. A necessary for intracellular retention in Golgi apparatus lumen region spans residues 309-362; the sequence is PMNEYNALNEAKQMIAVADENQNHHLEPEEVLKYSEFFTGSKLVDYARSVHEEF.

It belongs to the CREC family. As to quaternary structure, isoform 5 interacts with STXBP1; the interaction is enhanced in presence of calcium. Isoform 5 interacts with STX3. As to expression, ubiquitous. Isoform 5 is expressed in pancreas.

Its subcellular location is the golgi apparatus lumen. It is found in the cytoplasm. The protein localises to the cell membrane. It localises to the cell projection. The protein resides in the bleb. Its function is as follows. May regulate calcium-dependent activities in the endoplasmic reticulum lumen or post-ER compartment. In terms of biological role, isoform 5 may be involved in the exocytosis of zymogens by pancreatic acini. This is 45 kDa calcium-binding protein (SDF4) from Homo sapiens (Human).